Here is a 552-residue protein sequence, read N- to C-terminus: Outer dynein arm protein 1 (552 aa).

Positions methionine 1 to leucine 27 are disordered. Residues arginine 8–glycine 22 show a composition bias toward gly residues. Coiled coils occupy residues glycine 28–lysine 59, serine 120–leucine 260, and threonine 331–arginine 395. Disordered stretches follow at residues asparagine 482–histidine 515 and leucine 528–arginine 552. Residues glutamine 493–glutamate 506 show a composition bias toward acidic residues.

The protein belongs to the ODA1/DCC2 family. As to quaternary structure, component of the outer dynein arm complex.

The protein resides in the cytoplasm. The protein localises to the cytoskeleton. It is found in the cilium axoneme. In terms of biological role, component of the outer dynein arm complex required for assembly of the outer dynein arm-docking complex (ODA-DC) and the outer dynein arm onto the doublet microtubule. This chain is Outer dynein arm protein 1 (ODA1), found in Chlamydomonas reinhardtii (Chlamydomonas smithii).